Here is a 137-residue protein sequence, read N- to C-terminus: Small ribosomal subunit protein bS6 (137 aa).

The segment at 96-137 (ITEASPMAKAKDERDTRRSSEERAPRAEAAEEVEESAENTAE) is disordered. A compositionally biased stretch (basic and acidic residues) spans 104–124 (KAKDERDTRRSSEERAPRAEA). The segment covering 125–137 (AEEVEESAENTAE) has biased composition (acidic residues).

This sequence belongs to the bacterial ribosomal protein bS6 family.

Functionally, binds together with bS18 to 16S ribosomal RNA. The protein is Small ribosomal subunit protein bS6 of Shewanella halifaxensis (strain HAW-EB4).